A 226-amino-acid chain; its full sequence is Enolase-phosphatase E1 (226 aa).

Belongs to the HAD-like hydrolase superfamily. MasA/MtnC family. In terms of assembly, monomer. It depends on Mg(2+) as a cofactor.

It catalyses the reaction 5-methylsulfanyl-2,3-dioxopentyl phosphate + H2O = 1,2-dihydroxy-5-(methylsulfanyl)pent-1-en-3-one + phosphate. It functions in the pathway amino-acid biosynthesis; L-methionine biosynthesis via salvage pathway; L-methionine from S-methyl-5-thio-alpha-D-ribose 1-phosphate: step 3/6. The protein operates within amino-acid biosynthesis; L-methionine biosynthesis via salvage pathway; L-methionine from S-methyl-5-thio-alpha-D-ribose 1-phosphate: step 4/6. In terms of biological role, bifunctional enzyme that catalyzes the enolization of 2,3-diketo-5-methylthiopentyl-1-phosphate (DK-MTP-1-P) into the intermediate 2-hydroxy-3-keto-5-methylthiopentenyl-1-phosphate (HK-MTPenyl-1-P), which is then dephosphorylated to form the acireductone 1,2-dihydroxy-3-keto-5-methylthiopentene (DHK-MTPene). In Shewanella sp. (strain ANA-3), this protein is Enolase-phosphatase E1.